The primary structure comprises 146 residues: Hemoglobin subunit beta (146 aa).

N-acetylvaline is present on V1. One can recognise a Globin domain in the interval 2-146; that stretch reads HLTDAEKALV…VATALAHKYH (145 aa). T12 carries the phosphothreonine modification. Phosphoserine is present on S44. K59 carries the N6-acetyllysine modification. H63 is a binding site for heme b. K82 carries the post-translational modification N6-acetyllysine. H92 provides a ligand contact to heme b. C93 is modified (S-nitrosocysteine). K144 bears the N6-acetyllysine mark.

Belongs to the globin family. Heterotetramer of two alpha chains and two beta chains. In terms of tissue distribution, red blood cells.

In terms of biological role, involved in oxygen transport from the lung to the various peripheral tissues. This chain is Hemoglobin subunit beta, found in Peromyscus crinitus (Canyon mouse).